The sequence spans 370 residues: Pituitary-specific positive transcription factor 1 (370 aa).

Residues 5 to 13 (AFASSDNFV) carry the 9aaTAD motif. The region spanning 202–276 (MDSPEIRELE…ILSKWLEEAE (75 aa)) is the POU-specific domain. Positions 292–351 (KRKRRTTISIAAKEALERHFGEQSKPSSQEIMRMAEGLNLEKEVVRVWFCNRRQREKRVK) form a DNA-binding region, homeobox.

Belongs to the POU transcription factor family. Class-1 subfamily. In terms of tissue distribution, pituitary gland.

The protein localises to the nucleus. Transcription factor that activates growth hormone and prolactin genes. Specifically binds to the consensus sequence 5'-TAAAT-3'. The protein is Pituitary-specific positive transcription factor 1 (POU1F1) of Meleagris gallopavo (Wild turkey).